The following is a 155-amino-acid chain: Small ribosomal subunit protein uS9 (155 aa).

It belongs to the universal ribosomal protein uS9 family.

In Sinorhizobium fredii (strain NBRC 101917 / NGR234), this protein is Small ribosomal subunit protein uS9.